The following is a 2167-amino-acid chain: Papilin (2167 aa).

The N-terminal stretch at 1–19 is a signal peptide; it reads MRLLLFSAALLLCSVPTWA. The 48-residue stretch at 76–123 folds into the TSP type-1 1 domain; it reads TGNWGPWVPENECSRSCGGGVQLEKRQCSGDCTGASVRYISCNLNACE. Cystine bridges form between Cys-88–Cys-117, Cys-92–Cys-122, and Cys-103–Cys-107. A glycan (N-linked (GlcNAc...) asparagine) is linked at Asn-268. 3 TSP type-1 domains span residues 341 to 402, 404 to 459, and 461 to 525; these read VDYM…VDCE, EWFT…TCNR, and ACPE…GPCE. 3 disulfide bridges follow: Cys-353-Cys-396, Cys-357-Cys-401, and Cys-368-Cys-382. Residues Asn-386 and Asn-445 are each glycosylated (N-linked (GlcNAc...) asparagine). Residues Asn-541, Asn-568, and Asn-638 are each glycosylated (N-linked (GlcNAc...) asparagine). 2 consecutive TSP type-1 domains span residues 585 to 643 and 645 to 702; these read CEYE…TNEE and CTGT…DDCP. Asn-715, Asn-729, Asn-741, Asn-814, Asn-820, Asn-857, Asn-933, and Asn-1090 each carry an N-linked (GlcNAc...) asparagine glycan. 6 disulfide bridges follow: Cys-1089–Cys-1141, Cys-1099–Cys-1124, Cys-1116–Cys-1137, Cys-1150–Cys-1202, Cys-1161–Cys-1185, and Cys-1177–Cys-1198. BPTI/Kunitz inhibitor domains follow at residues 1089–1141 and 1150–1202; these read CNQT…ETIC and CYLP…SMFC. The segment at 1239–1273 is disordered; that stretch reads QSAEQPQPQQPQQQQQQQQQQPQQPRQSMEDICRS. Residues 1243–1263 show a composition bias toward low complexity; sequence QPQPQQPQQQQQQQQQQPQQP. 3 cysteine pairs are disulfide-bonded: Cys-1271–Cys-1321, Cys-1280–Cys-1304, and Cys-1296–Cys-1317. The region spanning 1271 to 1321 is the BPTI/Kunitz inhibitor 3 domain; the sequence is CRSRQDAGPCETYSDQWFYNAFSQECETFTYGGCGGNLNRFRSKDECEQRC. The disordered stretch occupies residues 1332–1365; that stretch reads ARQEQAQPAAQPAQPAQPSNIVSPPQQSASPVVV. Disulfide bonds link Cys-1375–Cys-1425, Cys-1384–Cys-1408, Cys-1400–Cys-1421, Cys-1447–Cys-1497, Cys-1456–Cys-1480, Cys-1472–Cys-1493, Cys-1504–Cys-1554, Cys-1513–Cys-1537, and Cys-1529–Cys-1550. BPTI/Kunitz inhibitor domains follow at residues 1375–1425, 1447–1497, and 1504–1554; these read CHLN…ESLC, CDEA…KAAC, and CQLP…QARC. The segment at 1556–1615 is disordered; sequence KDDQTTTTSQPEELPSLPLVQEDPQPRPAFSLKQSFAHSRRRDAPFARSVSARHHTPDSE. Disulfide bonds link Cys-1621–Cys-1671, Cys-1630–Cys-1654, Cys-1646–Cys-1667, Cys-1731–Cys-1781, Cys-1740–Cys-1764, Cys-1756–Cys-1777, Cys-1790–Cys-1840, Cys-1799–Cys-1823, and Cys-1815–Cys-1836. 3 consecutive BPTI/Kunitz inhibitor domains span residues 1621 to 1671, 1731 to 1781, and 1790 to 1840; these read CYAV…ETSC, CMLP…ERAC, and CELP…ESLC. Asn-1848 is a glycosylation site (N-linked (GlcNAc...) asparagine). Cystine bridges form between Cys-1853–Cys-1903, Cys-1862–Cys-1886, Cys-1878–Cys-1899, Cys-1914–Cys-1964, Cys-1923–Cys-1947, and Cys-1939–Cys-1960. 2 consecutive BPTI/Kunitz inhibitor domains span residues 1853-1903 and 1914-1964; these read CTLE…QQSC and CTLR…FRRC. Residues Asn-1992, Asn-2087, and Asn-2133 are each glycosylated (N-linked (GlcNAc...) asparagine). The disordered stretch occupies residues 2075 to 2106; the sequence is RTTSRPMLTPSKNFSLGTPPTPSPSTVSTTPF. Positions 2078–2090 are enriched in polar residues; sequence SRPMLTPSKNFSL. The 40-residue stretch at 2124–2163 folds into the PLAC domain; that stretch reads TSNSCMDVGNASTCDLIVKNGLCGKKRYGTFCCHTCTRVH.

It belongs to the papilin family. As to expression, localizes to the basement membranes of the gonad primordium, pharynx and intestine (at protein level). Expressed in head and CAN neurons, coelomocytes, body-wall muscles and anal depressor and sphincter and stomatointestinal muscles. Expressed Isoform a: is expressed in body wall muscles and distal cell tips. Isoform b: expressed in embryonic muscles.

It is found in the secreted. The protein localises to the extracellular space. Its subcellular location is the extracellular matrix. The protein resides in the basement membrane. Involved in pharynx morphogenesis probably by remodeling the basement membrane. Functionally, plays a role in embryogenesis, the second phase of distal cell tip migration and is required for distribution of the metalloproteinase, mig-17, during organogenesis. Its function is as follows. Plays a role in post embryonic distal cell tip migration. Essential extracellular matrix (ECM) protein required for hypodermal enclosure in the embryo. This Caenorhabditis elegans protein is Papilin (mig-6).